We begin with the raw amino-acid sequence, 608 residues long: Zinc finger protein 652 (608 aa).

Residue serine 57 is modified to Phosphoserine. The segment at 61 to 232 (VLADTKMSKP…KRATKEAKAP (172 aa)) is disordered. Positions 71–97 (HLHETEEQPYFREPRAVSDVHTVKEDR) are enriched in basic and acidic residues. Acidic residues-rich tracts occupy residues 98 to 108 (ENSDDTEEEEE) and 151 to 162 (EEDEEETEEEAT). The residue at position 100 (serine 100) is a Phosphoserine. At threonine 103 the chain carries Phosphothreonine. Over residues 194–208 (AASAAAATTSPAPRT) the composition is skewed to low complexity. Residues serine 196 and serine 203 each carry the phosphoserine modification. The segment at 244–267 (LTCEKCPRVFNTRWYLEKHMNVTH) adopts a C2H2-type 1 zinc-finger fold. Residues 271 to 293 (QICDKCGKKFVLESELSLHQQTD) form a C2H2-type 2; degenerate zinc finger. C2H2-type zinc fingers lie at residues 298 to 321 (IQCVSCNKSFKKLWSLHEHIKIVH), 328 to 350 (FACEICEKKFYTMAHVRKHMVAH), 356 to 378 (FTCETCGKSFKRSMSLKVHSLQH), 384 to 406 (FRCENCDERFQYKYQLRSHMSIH), 412 to 434 (FMCQWCGKDFNMKQYFDEHMKTH), and 440 to 462 (FICEICGKSFTSRPNMKRHRRTH). Residues 468–491 (YPCDVCGQRFRFSNMLKAHKEKCF) form a C2H2-type 9; degenerate zinc finger. Positions 497–608 (VNVPPAVQIP…KNSAAPAQHH (112 aa)) are mediates interaction with CBFA2T3.

Belongs to the krueppel C2H2-type zinc-finger protein family. Interacts with CBFA2T3.

Its subcellular location is the nucleus. Its function is as follows. Functions as a transcriptional repressor. The sequence is that of Zinc finger protein 652 (Znf652) from Mus musculus (Mouse).